A 124-amino-acid polypeptide reads, in one-letter code: 14 kDa peptide of ubiquinol-cytochrome c2 oxidoreductase complex (124 aa).

The chain crosses the membrane as a helical span at residues 85–102 (LGGFASGALLALALAGIF).

The protein resides in the cell inner membrane. Functionally, component of the ubiquinol-cytochrome c reductase complex (complex III or cytochrome b-c1 complex), which is a respiratory chain that generates an electrochemical potential coupled to ATP synthesis. This is 14 kDa peptide of ubiquinol-cytochrome c2 oxidoreductase complex from Cereibacter sphaeroides (Rhodobacter sphaeroides).